We begin with the raw amino-acid sequence, 183 residues long: Glutathione-regulated potassium-efflux system ancillary protein KefG (183 aa).

This sequence belongs to the NAD(P)H dehydrogenase (quinone) family. KefG subfamily. As to quaternary structure, interacts with KefB.

Its subcellular location is the cell inner membrane. The catalysed reaction is a quinone + NADH + H(+) = a quinol + NAD(+). It carries out the reaction a quinone + NADPH + H(+) = a quinol + NADP(+). In terms of biological role, regulatory subunit of a potassium efflux system that confers protection against electrophiles. Required for full activity of KefB. This chain is Glutathione-regulated potassium-efflux system ancillary protein KefG, found in Shigella flexneri serotype 5b (strain 8401).